A 296-amino-acid polypeptide reads, in one-letter code: 4-hydroxy-tetrahydrodipicolinate synthase (296 aa).

Pyruvate is bound at residue T49. Y137 functions as the Proton donor/acceptor in the catalytic mechanism. The active-site Schiff-base intermediate with substrate is the K166. I208 provides a ligand contact to pyruvate.

This sequence belongs to the DapA family. In terms of assembly, homotetramer; dimer of dimers.

The protein resides in the cytoplasm. The enzyme catalyses L-aspartate 4-semialdehyde + pyruvate = (2S,4S)-4-hydroxy-2,3,4,5-tetrahydrodipicolinate + H2O + H(+). The protein operates within amino-acid biosynthesis; L-lysine biosynthesis via DAP pathway; (S)-tetrahydrodipicolinate from L-aspartate: step 3/4. Functionally, catalyzes the condensation of (S)-aspartate-beta-semialdehyde [(S)-ASA] and pyruvate to 4-hydroxy-tetrahydrodipicolinate (HTPA). This is 4-hydroxy-tetrahydrodipicolinate synthase from Chlorobaculum parvum (strain DSM 263 / NCIMB 8327) (Chlorobium vibrioforme subsp. thiosulfatophilum).